The sequence spans 302 residues: uncharacterized protein (302 aa).

An N-terminal signal peptide occupies residues 1-22 (MLVVFKRLGFIVSIFSLTFLSA). Cys-23 carries N-palmitoyl cysteine lipidation. A lipid anchor (S-diacylglycerol cysteine) is attached at Cys-23.

This sequence belongs to the MG067/MG068/MG395 family.

The protein resides in the cell membrane. This is an uncharacterized protein from Mycoplasma pneumoniae (strain ATCC 29342 / M129 / Subtype 1) (Mycoplasmoides pneumoniae).